The chain runs to 300 residues: B1 kinase (300 aa).

The Protein kinase domain maps to 16–282; sequence WVVGPLIGKG…ITMVNSLTYF (267 aa). Residues 22 to 30 and Lys45 each bind ATP; that span reads IGKGGFGSI. Catalysis depends on Asp147, which acts as the Proton acceptor.

This sequence belongs to the protein kinase superfamily. Ser/Thr protein kinase family. Poxviruses subfamily. In terms of assembly, interacts with host JIP1; this interaction increases the amount of MAPK bound to JIP1 and subsequently increases the activity of transcription factors, such as JUN, that respond to these complexes. Interacts with protein OPG198; this interaction inhibits the repressive activity of OPG198 pseudokinase on viral replication factory formation. The cofactor is Mg(2+). In terms of processing, autophosphorylated.

It localises to the virion. The protein localises to the host cytoplasm. The enzyme catalyses L-seryl-[protein] + ATP = O-phospho-L-seryl-[protein] + ADP + H(+). It catalyses the reaction L-threonyl-[protein] + ATP = O-phospho-L-threonyl-[protein] + ADP + H(+). Essential serine/threonine-protein kinase that plays different role in the viral life cycle. Phosphorylates the host small ribosomal protein RACK1 thereby customizing the ribosomes to a state optimal for viral mRNAs (which contain poly-A leaders) but not for host mRNAs. Facilitates viral DNA replication by inhibiting host BANF1, a cellular host defense responsive to foreign DNA. Phosphorylates host BANF1 on serine and threonine residues; this leads to BANF1 relocalization to the cytoplasm, loss of dimerization and impaired DNA binding activity. Indeed, BANF1 activity depends on its DNA-binding property which is blocked by VPK1-mediated phosphorylation. Required for viral intermediate genes expression, probably by inhibiting host BANF1. Modulates cellular responses via host JUN by two different mechanisms, either by direct phosphorylation or by modulation of upstream JIP1-MAPK complexes. Seems to participate in the accumulation/processing of late proteins and thus in virion maturation. In addition, inhibits B12 repressive activity on viral DNA replication via a phosphorylation-dependent mechanism. This is B1 kinase (OPG187) from Bos taurus (Bovine).